The chain runs to 136 residues: ATP synthase F(0) complex subunit C1, mitochondrial (136 aa).

Residues 1-61 (MQTAGALFIS…REFQTSVVSR (61 aa)) constitute a mitochondrion transit peptide. Residues 77–97 (VGVAGSGAGIGTVFGSLIIGY) traverse the membrane as a helical segment. The residue at position 104 (K104) is an N6,N6,N6-trimethyllysine. The helical transmembrane segment at 112–132 (ILGFALSEAMGLFCLMVAFLI) threads the bilayer.

The protein belongs to the ATPase C chain family. In terms of assembly, homooctamer; the c-ring consists of eight c subunits forming a circle, and each subunit adopts a hairpin shape. Component of the ATP synthase complex composed at least of ATP5F1A/subunit alpha, ATP5F1B/subunit beta, ATP5MC1/subunit c (homooctomer), MT-ATP6/subunit a, MT-ATP8/subunit 8, ATP5ME/subunit e, ATP5MF/subunit f, ATP5MG/subunit g, ATP5MK/subunit k, ATP5MJ/subunit j, ATP5F1C/subunit gamma, ATP5F1D/subunit delta, ATP5F1E/subunit epsilon, ATP5PF/subunit F6, ATP5PB/subunit b, ATP5PD/subunit d, ATP5PO/subunit OSCP. ATP synthase complex consists of a soluble F(1) head domain (subunits alpha(3) and beta(3)) - the catalytic core - and a membrane F(0) domain - the membrane proton channel (subunits c, a, 8, e, f, g, k and j). These two domains are linked by a central stalk (subunits gamma, delta, and epsilon) rotating inside the F1 region and a stationary peripheral stalk (subunits F6, b, d, and OSCP). Interacts with TMEM70 (homooligomer form); this interaction facilitates the oligomer formation of subunit c/ATP5MC1 (c-ring) and the c-ring membrane insertion and also protects ATP5MC1 against intramitochondrial proteolysis. Trimethylated by ATPSCKMT at Lys-104. Methylation is required for proper incorporation of the C subunit into the ATP synthase complex and mitochondrial respiration.

Its subcellular location is the mitochondrion membrane. It catalyses the reaction H(+)(in) = H(+)(out). Its function is as follows. Subunit c, of the mitochondrial membrane ATP synthase complex (F(1)F(0) ATP synthase or Complex V) that produces ATP from ADP in the presence of a proton gradient across the membrane which is generated by electron transport complexes of the respiratory chain. ATP synthase complex consist of a soluble F(1) head domain - the catalytic core - and a membrane F(1) domain - the membrane proton channel. These two domains are linked by a central stalk rotating inside the F(1) region and a stationary peripheral stalk. During catalysis, ATP synthesis in the catalytic domain of F(1) is coupled via a rotary mechanism of the central stalk subunits to proton translocation. With the subunit a (MT-ATP6), forms the proton-conducting channel in the F(0) domain, that contains two crucial half-channels (inlet and outlet) that facilitate proton movement from the mitochondrial intermembrane space (IMS) into the matrix. Protons are taken up via the inlet half-channel and released through the outlet half-channel, following a Grotthuss mechanism. In Homo sapiens (Human), this protein is ATP synthase F(0) complex subunit C1, mitochondrial.